Reading from the N-terminus, the 864-residue chain is uncharacterized protein (864 aa).

This is an uncharacterized protein from Rickettsia typhi (strain ATCC VR-144 / Wilmington).